The following is a 208-amino-acid chain: Ribosomal RNA large subunit methyltransferase E (208 aa).

Positions 62, 64, 82, 98, and 123 each coordinate S-adenosyl-L-methionine. Residue Lys-163 is the Proton acceptor of the active site.

It belongs to the class I-like SAM-binding methyltransferase superfamily. RNA methyltransferase RlmE family.

The protein resides in the cytoplasm. The catalysed reaction is uridine(2552) in 23S rRNA + S-adenosyl-L-methionine = 2'-O-methyluridine(2552) in 23S rRNA + S-adenosyl-L-homocysteine + H(+). Functionally, specifically methylates the uridine in position 2552 of 23S rRNA at the 2'-O position of the ribose in the fully assembled 50S ribosomal subunit. The polypeptide is Ribosomal RNA large subunit methyltransferase E (Mannheimia succiniciproducens (strain KCTC 0769BP / MBEL55E)).